We begin with the raw amino-acid sequence, 278 residues long: NAD-dependent protein deacylase (278 aa).

The Deacetylase sirtuin-type domain occupies 22 to 270 (RSRIFHRDSA…PEYIREFLTT (249 aa)). Residue 46–65 (GAGISAESGIRTFRADDGLW) coordinates NAD(+). 2 residues coordinate substrate: Y90 and R93. Position 127-130 (127-130 (QNID)) interacts with NAD(+). Catalysis depends on H145, which acts as the Proton acceptor. Residues C153 and C172 each coordinate Zn(2+). NAD(+) contacts are provided by residues 212-214 (GTS), 238-240 (NLE), and A256.

It belongs to the sirtuin family. Class III subfamily. The cofactor is Zn(2+).

The protein localises to the cytoplasm. The catalysed reaction is N(6)-acetyl-L-lysyl-[protein] + NAD(+) + H2O = 2''-O-acetyl-ADP-D-ribose + nicotinamide + L-lysyl-[protein]. It carries out the reaction N(6)-succinyl-L-lysyl-[protein] + NAD(+) + H2O = 2''-O-succinyl-ADP-D-ribose + nicotinamide + L-lysyl-[protein]. The enzyme catalyses N(6)-(2-hydroxyisobutanoyl)-L-lysyl-[protein] + NAD(+) + H2O = 2''-O-(2-hydroxyisobutanoyl)-ADP-D-ribose + nicotinamide + L-lysyl-[protein]. NAD-dependent lysine deacetylase that specifically removes acetyl groups on target proteins. Also acts as a protein-lysine deacylase by mediating protein desuccinylation and de-2-hydroxyisobutyrylation. Modulates the activities of several proteins which are inactive in their acylated form. The sequence is that of NAD-dependent protein deacylase from Yersinia pestis.